The primary structure comprises 191 residues: GDP-mannose pyrophosphatase (191 aa).

GDP-alpha-D-mannose contacts are provided by residues Y17, 38-40 (KRE), R67, and 85-87 (AGL). The region spanning 43–180 (DRGNGATILL…EIRDGKTVLL (138 aa)) is the Nudix hydrolase domain. Mg(2+)-binding residues include A85, E100, and E104. Positions 86–106 (GLLDNDEPEVCIRKEAIEETG) match the Nudix box motif. GDP-alpha-D-mannose contacts are provided by residues E104, E127, 150 to 151 (DE), and K176. E151 serves as a coordination point for Mg(2+).

The protein belongs to the Nudix hydrolase family. NudK subfamily. As to quaternary structure, homodimer. Mg(2+) is required as a cofactor.

It carries out the reaction GDP-alpha-D-mannose + H2O = alpha-D-mannose 1-phosphate + GMP + 2 H(+). Its function is as follows. Nucleoside diphosphate sugar hydrolase that hydrolyzes GDP-mannose as its preferred substrate, yielding GMP and mannose-1-phosphate. The polypeptide is GDP-mannose pyrophosphatase (nudK) (Salmonella typhi).